The sequence spans 468 residues: Adenosylhomocysteinase (468 aa).

Substrate-binding residues include Thr-57, Asp-132, and Glu-194. Position 195 to 197 (195 to 197 (TTT)) interacts with NAD(+). Residues Lys-224 and Asp-228 each coordinate substrate. NAD(+) is bound by residues Asn-229, 258 to 263 (GFGDVG), Glu-281, Asn-316, 337 to 339 (IGH), and Asn-382.

It belongs to the adenosylhomocysteinase family. NAD(+) serves as cofactor.

Its subcellular location is the cytoplasm. It carries out the reaction S-adenosyl-L-homocysteine + H2O = L-homocysteine + adenosine. It participates in amino-acid biosynthesis; L-homocysteine biosynthesis; L-homocysteine from S-adenosyl-L-homocysteine: step 1/1. Its function is as follows. May play a key role in the regulation of the intracellular concentration of adenosylhomocysteine. The polypeptide is Adenosylhomocysteinase (Methylorubrum populi (strain ATCC BAA-705 / NCIMB 13946 / BJ001) (Methylobacterium populi)).